Here is a 199-residue protein sequence, read N- to C-terminus: N-(5'-phosphoribosyl)anthranilate isomerase (199 aa).

It belongs to the TrpF family.

It catalyses the reaction N-(5-phospho-beta-D-ribosyl)anthranilate = 1-(2-carboxyphenylamino)-1-deoxy-D-ribulose 5-phosphate. The protein operates within amino-acid biosynthesis; L-tryptophan biosynthesis; L-tryptophan from chorismate: step 3/5. The polypeptide is N-(5'-phosphoribosyl)anthranilate isomerase (Clostridium kluyveri (strain NBRC 12016)).